Consider the following 288-residue polypeptide: HTH-type transcriptional regulator CzcR (288 aa).

In terms of domain architecture, HTH lysR-type spans 1 to 58 (MELRDLQIFQSVADQGSVSSAAKELNYVQSNVTARIKQLENELKTPLFYRHKRGMTLT). The H-T-H motif DNA-binding region spans 18-37 (VSSAAKELNYVQSNVTARIK).

It belongs to the LysR transcriptional regulatory family.

This chain is HTH-type transcriptional regulator CzcR (czcR), found in Bacillus anthracis.